Here is a 524-residue protein sequence, read N- to C-terminus: Translation initiation factor eIF2B subunit delta (524 aa).

The interval 1-174 is disordered; that stretch reads MAAVAVAVRE…RQQVPTRKDY (174 aa). N-acetylalanine is present on Ala-2. Basic and acidic residues-rich tracts occupy residues 8-20 and 31-40; these read VREE…KTEL and LTQEEKLQLR. Residue Ser-12 is modified to Phosphoserine. The span at 41–51 shows a compositional bias: basic residues; sequence KEKKQQKKKRK. At Thr-86 the chain carries Phosphothreonine. Basic and acidic residues-rich tracts occupy residues 96–121 and 161–174; these read SKAE…RKGE and RKPD…RKDY. The interval 171–180 is may bind the chemical integrated stress response (ISR) inhibitor ISRIB; the sequence is RKDYGSKVSL.

This sequence belongs to the eIF-2B alpha/beta/delta subunits family. As to quaternary structure, component of the translation initiation factor 2B (eIF2B) complex which is a heterodecamer of two sets of five different subunits: alpha, beta, gamma, delta and epsilon. Subunits alpha, beta and delta comprise a regulatory subcomplex and subunits epsilon and gamma comprise a catalytic subcomplex. Within the complex, the hexameric regulatory complex resides at the center, with the two heterodimeric catalytic subcomplexes bound on opposite sides.

The protein localises to the cytoplasm. Its subcellular location is the cytosol. Its activity is regulated as follows. Activated by the chemical integrated stress response (ISR) inhibitor ISRIB which stimulates guanine nucleotide exchange factor activity for both phosphorylated and unphosphorylated eIF2. In terms of biological role, acts as a component of the translation initiation factor 2B (eIF2B) complex, which catalyzes the exchange of GDP for GTP on eukaryotic initiation factor 2 (eIF2) gamma subunit. Its guanine nucleotide exchange factor activity is repressed when bound to eIF2 complex phosphorylated on the alpha subunit, thereby limiting the amount of methionyl-initiator methionine tRNA available to the ribosome and consequently global translation is repressed. This chain is Translation initiation factor eIF2B subunit delta (Eif2b4), found in Rattus norvegicus (Rat).